A 257-amino-acid polypeptide reads, in one-letter code: Isoprenyl transferase (257 aa).

Asp-34 is an active-site residue. Asp-34 is a Mg(2+) binding site. Substrate contacts are provided by residues 35–38 (GNGR), Trp-39, Arg-47, His-51, and 79–81 (STE). The Proton acceptor role is filled by Asn-82. Substrate contacts are provided by residues Trp-83, Arg-85, Arg-202, and 208-210 (RLS). Glu-221 is a Mg(2+) binding site.

The protein belongs to the UPP synthase family. As to quaternary structure, homodimer. Mg(2+) is required as a cofactor.

Functionally, catalyzes the condensation of isopentenyl diphosphate (IPP) with allylic pyrophosphates generating different type of terpenoids. This Geobacillus kaustophilus (strain HTA426) protein is Isoprenyl transferase.